The chain runs to 809 residues: Transitional endoplasmic reticulum ATPase homolog 1 (809 aa).

The interval 1–21 is disordered; it reads MASVPTHQSEKEKKNDELSTA. A compositionally biased stretch (basic and acidic residues) spans 8–21; the sequence is QSEKEKKNDELSTA. ATP-binding positions include 253–259, Asn354, His390, and 527–532; these read PGTGKTL and GCGKTL. Residues 779-809 form a disordered region; it reads FGNNFKFPGEQRGSDAPSAPVPAQDDDDLYN. An interaction with ufd-2 region spans residues 803-809; that stretch reads DDDDLYN.

It belongs to the AAA ATPase family. CDC48 subfamily. Homohexamer; oligomerization is ATP-independent. Forms a ring-shaped particle of 18.3 nm diameter, that displays 6-fold radial symmetry. Interacts with cdc-48.2 and thus may form heterohexamers. Forms a complex composed of cdc-48.1, him-6 and crp-1; within the complex, interacts with helicase him-6 and GTPase crp-1. Forms a complex composed of deubiquitinating enzyme atx-3, adapter ubxn-5 and cdc-48.1; within the complex, interacts (via N-terminus) with ubxn-5 and with atx-3. Forms a complex composed of deubiquitinating enzyme atx-3, E4 ubiquitin-protein ligase ufd-2 and cdc-48.1; within the complex, interacts with atx-3 and (via DDDLYN motif) with ufd-2. Interacts (via N-terminus) with atx-3 (via RRDR motif); the interaction is not required for atx-3 enzymatic activity. Forms a complex composed of cdc-48.1, myosin chaperone unc-45, ubiquitin-protein ligases ufd-2 and chn-1; within the complex, interacts (via DDDLYN motif) with ufd-2 and targets myosin chaperone unc-45 for proteasomal degradation. Forms a complex composed of ubxn-3, ufd-1, npl-4.1 and cdc-48.1; within the complex, interacts (via N-terminus) with ubxn-3 (via FPK motif) and with ufd-1. Forms a complex composed of ubxn-3, cdc-48.1 and/or cdc-48.2 and substrate cdt-1. Interacts (via N-terminus) with ubxn-1. Interacts (via N-terminus) with ubxn-2. Interacts (via N-terminus) with ubxn-4. Interacts with ubxn-6. Interacts with ufd-3. Does not interact with air-2. As to expression, expressed in germ cells and spermatheca. Expressed in body wall muscles.

The protein localises to the cytoplasm. It localises to the perinuclear region. It carries out the reaction ATP + H2O = ADP + phosphate + H(+). With respect to regulation, the first ATP-binding region has low ATPase activity. The second ATP-binding region is responsible for ATPase activity. ATP binding to the first ATP-binding region induces intrinsic activity of the second ATP-binding region. While ATP binding to the first ATP-binding region appears to prevent ATP hydrolysis by the second ATP-binding region, ADP-binding to first region promotes the coordinate and cooperative ATPase cycle of the second ATP-binding region. ATP binding to the first ATP-binding region induces a conformational change, promoting the rotation of the first ATP-binding region relative to the second ATP-binding region in the hexamer. Inhibited by N-ethylmaleimide (NEM). Functionally, ATP-dependent chaperone which probably uses the energy provided by ATP hydrolysis to generate mechanical force to unfold substrate proteins, disassemble protein complexes, and disaggregate protein aggregates. Can also prevent aggregation of unfolded proteins also in an ATP-independent manner. Targets polyubiquitinated proteins for proteasomal degradation by binding to 'Lys-48'-linked polyubiquitin chains. Involved in the cytoplasmic elimination of misfolded proteins exported from the ER. This pathway, known as ERAD, prevents the activation of the unfolded protein response (UPR) caused by the accumulation of misfolded proteins in the ER. In association with helicase him-6 and GTPase crp-1, regulates the unfolded protein response (UPR) following ER stress, probably independently of the ERAD pathway. Together with udf-2 and chn-1, regulates myosin assembly in body wall muscles by targeting myosin chaperone unc-45 for proteasomal degradation. Together with the ufd-1-npl-4 complex, controls the switch from spermatogenesis to oogenesis by regulating E3 ligase cul-2 complex-mediated tra-1 proteasomal degradation. During oocyte meiosis and together with cdc-48.2, required for chromosome condensation at the diakinesis phase in prophase I and for progression of metaphase I. During the first embryonic cell division, regulates DNA replication and thus chromosome segregation and decondensation, and nuclear envelope re-assembly. In S phase and in association with ufd-1, npl-4.1 and/or npl-4.2 and ubxn-3, ensures the degradation of DNA licensing factor cdt-1 after the initiation of DNA replication and thus the disassembly of the DNA replication CMG helicase complex by promoting the dissociation from chromatin of several of its components including cdc-45 and sld-5. Regulates ubxn-3 nuclear localization during S phase. During the first embryonic cell divisions and together with cdc-48.2, regulates the re-assembly of the nuclear envelope after mitosis possibly by inactivating kinase air-2, a component of the chromosomal passenger complex (CPC). However, in another study, cdc-48.1 does not appear to be implicated in the regulation of air-2. The chain is Transitional endoplasmic reticulum ATPase homolog 1 from Caenorhabditis elegans.